The following is a 329-amino-acid chain: Phenylalanine--tRNA ligase alpha subunit (329 aa).

E254 lines the Mg(2+) pocket.

This sequence belongs to the class-II aminoacyl-tRNA synthetase family. Phe-tRNA synthetase alpha subunit type 1 subfamily. As to quaternary structure, tetramer of two alpha and two beta subunits. It depends on Mg(2+) as a cofactor.

The protein localises to the cytoplasm. The enzyme catalyses tRNA(Phe) + L-phenylalanine + ATP = L-phenylalanyl-tRNA(Phe) + AMP + diphosphate + H(+). In Histophilus somni (strain 2336) (Haemophilus somnus), this protein is Phenylalanine--tRNA ligase alpha subunit.